We begin with the raw amino-acid sequence, 261 residues long: Hydroxyethylthiazole kinase (261 aa).

Residue methionine 45 participates in substrate binding. ATP contacts are provided by arginine 121 and serine 167. Glycine 194 contacts substrate.

It belongs to the Thz kinase family. Requires Mg(2+) as cofactor.

It carries out the reaction 5-(2-hydroxyethyl)-4-methylthiazole + ATP = 4-methyl-5-(2-phosphooxyethyl)-thiazole + ADP + H(+). It functions in the pathway cofactor biosynthesis; thiamine diphosphate biosynthesis; 4-methyl-5-(2-phosphoethyl)-thiazole from 5-(2-hydroxyethyl)-4-methylthiazole: step 1/1. Functionally, catalyzes the phosphorylation of the hydroxyl group of 4-methyl-5-beta-hydroxyethylthiazole (THZ). In Vibrio atlanticus (strain LGP32) (Vibrio splendidus (strain Mel32)), this protein is Hydroxyethylthiazole kinase.